A 56-amino-acid chain; its full sequence is Small ribosomal subunit protein bS21 (56 aa).

It belongs to the bacterial ribosomal protein bS21 family.

This is Small ribosomal subunit protein bS21 (rpsU) from Geobacillus stearothermophilus (Bacillus stearothermophilus).